A 173-amino-acid chain; its full sequence is Large ribosomal subunit protein uL10 (173 aa).

This sequence belongs to the universal ribosomal protein uL10 family. Part of the ribosomal stalk of the 50S ribosomal subunit. The N-terminus interacts with L11 and the large rRNA to form the base of the stalk. The C-terminus forms an elongated spine to which L12 dimers bind in a sequential fashion forming a multimeric L10(L12)X complex.

Its function is as follows. Forms part of the ribosomal stalk, playing a central role in the interaction of the ribosome with GTP-bound translation factors. The protein is Large ribosomal subunit protein uL10 of Thermus thermophilus (strain ATCC BAA-163 / DSM 7039 / HB27).